The primary structure comprises 359 residues: Alkanal monooxygenase alpha chain (359 aa).

It belongs to the bacterial luciferase oxidoreductase family. As to quaternary structure, heterodimer of an alpha and a beta chain.

It catalyses the reaction a long-chain fatty aldehyde + FMNH2 + O2 = a long-chain fatty acid + hnu + FMN + H2O + 2 H(+). Functionally, light-emitting reaction in luminous bacteria. This chain is Alkanal monooxygenase alpha chain (luxA), found in Photorhabdus laumondii subsp. laumondii (strain DSM 15139 / CIP 105565 / TT01) (Photorhabdus luminescens subsp. laumondii).